Consider the following 274-residue polypeptide: NH(3)-dependent NAD(+) synthetase (274 aa).

27–34 (GLSGGIDS) contacts ATP. Aspartate 33 lines the Mg(2+) pocket. Arginine 121 contributes to the deamido-NAD(+) binding site. Threonine 141 provides a ligand contact to ATP. Glutamate 146 contacts Mg(2+). Positions 170 and 192 each coordinate ATP.

Belongs to the NAD synthetase family. Homodimer.

It catalyses the reaction deamido-NAD(+) + NH4(+) + ATP = AMP + diphosphate + NAD(+) + H(+). It functions in the pathway cofactor biosynthesis; NAD(+) biosynthesis; NAD(+) from deamido-NAD(+) (ammonia route): step 1/1. Functionally, catalyzes the ATP-dependent amidation of deamido-NAD to form NAD. Uses ammonia as a nitrogen source. This chain is NH(3)-dependent NAD(+) synthetase, found in Helicobacter hepaticus (strain ATCC 51449 / 3B1).